Here is a 100-residue protein sequence, read N- to C-terminus: Small ribosomal subunit protein uS14c (100 aa).

The protein belongs to the universal ribosomal protein uS14 family. Part of the 30S ribosomal subunit.

It is found in the plastid. Its subcellular location is the chloroplast. Its function is as follows. Binds 16S rRNA, required for the assembly of 30S particles. The chain is Small ribosomal subunit protein uS14c from Draba nemorosa (Woodland whitlowgrass).